Consider the following 167-residue polypeptide: Insertion element IS1 2 protein InsB (167 aa).

The protein belongs to the transposase 27 family.

Absolutely required for transposition of IS1. This is Insertion element IS1 2 protein InsB (insB2) from Escherichia coli (strain K12).